The primary structure comprises 199 residues: Recombination protein RecR (199 aa).

The C4-type zinc finger occupies 58–73 (CSVCGNLTDTDVCPLC). Residues 81-176 (SVICVVEDPR…KTTRIAHGIP (96 aa)) enclose the Toprim domain.

This sequence belongs to the RecR family.

In terms of biological role, may play a role in DNA repair. It seems to be involved in an RecBC-independent recombinational process of DNA repair. It may act with RecF and RecO. The polypeptide is Recombination protein RecR (Acetivibrio thermocellus (strain ATCC 27405 / DSM 1237 / JCM 9322 / NBRC 103400 / NCIMB 10682 / NRRL B-4536 / VPI 7372) (Clostridium thermocellum)).